The sequence spans 401 residues: uncharacterized protein (401 aa).

Helical transmembrane passes span 44–64, 69–89, 99–119, 130–150, 201–221, 246–266, and 286–306; these read LKYT…LVFI, LYSF…FVLL, LVFN…LIIF, ILST…SIIP, FIYA…LYIL, ILFY…SFVA, and LFFS…GTVV.

The protein resides in the cell membrane. This is an uncharacterized protein from Mycoplasma pneumoniae (strain ATCC 29342 / M129 / Subtype 1) (Mycoplasmoides pneumoniae).